The chain runs to 214 residues: Adenylate kinase (214 aa).

Gly-10–Thr-15 is an ATP binding site. An NMP region spans residues Ser-30–Val-59. AMP-binding positions include Thr-31, Arg-36, Glu-57–Val-59, Gly-85–Arg-88, and Gln-92. The segment at Gly-126–Asp-163 is LID. Arg-127 is an ATP binding site. Cys-130 and Cys-133 together coordinate Zn(2+). Thr-136–Tyr-137 serves as a coordination point for ATP. Zn(2+) is bound by residues Cys-150 and Cys-153. The AMP site is built by Arg-160 and Arg-171. Position 199 (Gly-199) interacts with ATP.

This sequence belongs to the adenylate kinase family. Monomer.

It localises to the cytoplasm. It catalyses the reaction AMP + ATP = 2 ADP. It participates in purine metabolism; AMP biosynthesis via salvage pathway; AMP from ADP: step 1/1. In terms of biological role, catalyzes the reversible transfer of the terminal phosphate group between ATP and AMP. Plays an important role in cellular energy homeostasis and in adenine nucleotide metabolism. In Ruminiclostridium cellulolyticum (strain ATCC 35319 / DSM 5812 / JCM 6584 / H10) (Clostridium cellulolyticum), this protein is Adenylate kinase.